We begin with the raw amino-acid sequence, 1270 residues long: DNA-directed RNA polymerase subunit beta (1270 aa).

The protein belongs to the RNA polymerase beta chain family. In terms of assembly, the RNAP catalytic core consists of 2 alpha, 1 beta, 1 beta' and 1 omega subunit. When a sigma factor is associated with the core the holoenzyme is formed, which can initiate transcription.

It carries out the reaction RNA(n) + a ribonucleoside 5'-triphosphate = RNA(n+1) + diphosphate. DNA-dependent RNA polymerase catalyzes the transcription of DNA into RNA using the four ribonucleoside triphosphates as substrates. This Porphyromonas cangingivalis protein is DNA-directed RNA polymerase subunit beta.